A 527-amino-acid polypeptide reads, in one-letter code: L-amino-acid oxidase (527 aa).

The first 27 residues, 1–27 (MDLHRAPWKSSAAAAVLLLALFSGAAA), serve as a signal peptide directing secretion. Cys-37 and Cys-200 are joined by a disulfide. N-linked (GlcNAc...) asparagine glycosylation is present at Asn-58. Residues 70–71 (VA), 90–91 (EA), Arg-98, 114–117 (GAMR), and Val-288 contribute to the FAD site. Residue Arg-117 participates in substrate binding. The N-linked (GlcNAc...) asparagine glycan is linked to Asn-393. Residue Tyr-403 coordinates substrate. Residues Glu-485 and 492-497 (AWMESA) contribute to the FAD site. Substrate is bound at residue 492 to 493 (AW).

In terms of assembly, homodimer. FAD serves as cofactor. Expression mainly observed in plasma, spleen, kidney and gills with low levels detected in blood and no expression detected in brain, liver, heart, muscle or intestine (at protein level).

Its subcellular location is the secreted. The enzyme catalyses an L-alpha-amino acid + O2 + H2O = a 2-oxocarboxylate + H2O2 + NH4(+). Functionally, inhibits the growth of both Gram-negative and Gram-positive bacteria. Displays strong antibacterial activity towards V.cholerae and E.tarda. Causes deformation of the surface of S.aureus and the formation of pores on the surface of E.coli. Strong antiparasitic activity is seen towards C.irritans, T.brucei and I.multifiliis. Cilia of treated theronts are lost and the macronucleus swells, inducing cell membrane rupture and efflux of the cytoplasm. This chain is L-amino-acid oxidase, found in Siganus canaliculatus (White-spotted spinefoot).